The primary structure comprises 323 residues: Transcription factor MafB (323 aa).

A Glycyl lysine isopeptide (Lys-Gly) (interchain with G-Cter in SUMO) cross-link involves residue Lys-32. Basic and acidic residues predominate over residues 34–43 (EPLGRAERPG). Disordered regions lie at residues 34–78 (EPLG…PTEP) and 116–210 (PVPQ…VEDR). The segment covering 54–77 (SVSSTPLSTPCSSVPSSPSFSPTE) has biased composition (low complexity). Basic residues-rich tracts occupy residues 129 to 143 (SAHHHHHHHHPHPHH) and 159 to 168 (AHPHHHHHHQ). Residues 192–201 (PHATAAATAA) show a composition bias toward low complexity. Residues 238-263 (RLKQKRRTLKNRGYAQSCRYKRVQQK) form a basic motif region. One can recognise a bZIP domain in the interval 238–301 (RLKQKRRTLK…DAYKVKCEKL (64 aa)). The segment at 266-287 (LENEKTQLIQQVEQLKQEVSRL) is leucine-zipper. A Glycyl lysine isopeptide (Lys-Gly) (interchain with G-Cter in SUMO) cross-link involves residue Lys-297.

This sequence belongs to the bZIP family. Maf subfamily. Homodimer or heterodimer with other bHLH-Zip transcription factors. Forms homodimers and heterodimers with FOS, FOSB and FOSL2, but not with JUN proteins (JUN, JUNB and JUND). Interacts with the intracellular cytoplasmic domain of LRP1 (LRPICD); the interaction results in a moderate reduction of MAFB transcriptional potential. Binds DNA as a homodimer or a heterodimer. Interacts with PAX6; the interaction is direct. Interacts with ETS1 and LRP1. In terms of processing, sumoylated. Sumoylation on Lys-32 and Lys-297 stimulates its transcriptional repression activity and promotes macrophage differentiation from myeloid progenitors. In terms of tissue distribution, expressed in pancreatic alpha-cells (glucagon-positive cells), in podocytes of the kidney and macrophages (at protein level). Most abundant in kidney, gut, lung and brain.

The protein localises to the nucleus. Its function is as follows. Acts as a transcriptional activator or repressor. Plays a pivotal role in regulating lineage-specific hematopoiesis by repressing ETS1-mediated transcription of erythroid-specific genes in myeloid cells. Required for monocytic, macrophage, osteoclast, podocyte and islet beta cell differentiation. Involved in renal tubule survival and F4/80 maturation. Activates the insulin and glucagon promoters. Together with PAX6, transactivates weakly the glucagon gene promoter through the G1 element. SUMO modification controls its transcriptional activity and ability to specify macrophage fate. Binds element G1 on the glucagon promoter. Involved either as an oncogene or as a tumor suppressor, depending on the cell context. Required for the transcriptional activation of HOXB3 in the rhombomere r5 in the hindbrain. The chain is Transcription factor MafB (Mafb) from Mus musculus (Mouse).